Here is a 417-residue protein sequence, read N- to C-terminus: N-acetylmuramoyl-L-alanine amidase AmiC (417 aa).

A signal peptide (tat-type signal) is located at residues 1–31 (MSGSNTAISRRRLLQGAGAMWLLSVSQVSLA). A disordered region spans residues 166 to 185 (LEKQVPPAQSGPQPGKAGRD). The 215-residue stretch at 190–404 (IMLDPGHGGE…VAESILAGIK (215 aa)) folds into the MurNAc-LAA domain.

The protein belongs to the N-acetylmuramoyl-L-alanine amidase 3 family. In terms of processing, predicted to be exported by the Tat system. The position of the signal peptide cleavage has not been experimentally proven.

It localises to the periplasm. It catalyses the reaction Hydrolyzes the link between N-acetylmuramoyl residues and L-amino acid residues in certain cell-wall glycopeptides.. Cell-wall hydrolase involved in septum cleavage during cell division. The sequence is that of N-acetylmuramoyl-L-alanine amidase AmiC (amiC) from Escherichia coli O6:H1 (strain CFT073 / ATCC 700928 / UPEC).